The chain runs to 336 residues: Aspartate--ammonia ligase (336 aa).

It belongs to the class-II aminoacyl-tRNA synthetase family. AsnA subfamily.

It localises to the cytoplasm. It catalyses the reaction L-aspartate + NH4(+) + ATP = L-asparagine + AMP + diphosphate + H(+). The protein operates within amino-acid biosynthesis; L-asparagine biosynthesis; L-asparagine from L-aspartate (ammonia route): step 1/1. This Lactobacillus acidophilus (strain ATCC 700396 / NCK56 / N2 / NCFM) protein is Aspartate--ammonia ligase.